The following is a 188-amino-acid chain: Pyridoxal 5'-phosphate synthase subunit PdxT (188 aa).

G46–S48 is an L-glutamine binding site. The active-site Nucleophile is C78. L-glutamine contacts are provided by residues R105 and I134–R135. Active-site charge relay system residues include H170 and E172.

It belongs to the glutaminase PdxT/SNO family. In terms of assembly, in the presence of PdxS, forms a dodecamer of heterodimers. Only shows activity in the heterodimer.

The catalysed reaction is aldehydo-D-ribose 5-phosphate + D-glyceraldehyde 3-phosphate + L-glutamine = pyridoxal 5'-phosphate + L-glutamate + phosphate + 3 H2O + H(+). It carries out the reaction L-glutamine + H2O = L-glutamate + NH4(+). The protein operates within cofactor biosynthesis; pyridoxal 5'-phosphate biosynthesis. In terms of biological role, catalyzes the hydrolysis of glutamine to glutamate and ammonia as part of the biosynthesis of pyridoxal 5'-phosphate. The resulting ammonia molecule is channeled to the active site of PdxS. The chain is Pyridoxal 5'-phosphate synthase subunit PdxT from Thermotoga maritima (strain ATCC 43589 / DSM 3109 / JCM 10099 / NBRC 100826 / MSB8).